The chain runs to 374 residues: NAD-capped RNA hydrolase ndx-9 (374 aa).

The Zn(2+) site is built by cysteine 181, cysteine 184, cysteine 199, and cysteine 202. Residues tyrosine 207, 243-245 (AGF), glutamate 259, glutamate 263, and glutamate 307 each bind substrate. The Nudix hydrolase domain maps to 208 to 336 (PTFSPVSITL…LADPLLKNLP (129 aa)). Alanine 243, glutamate 259, glutamate 263, and glutamate 307 together coordinate Mg(2+). Positions 244 to 265 (GFAHSGESMAECARREIAEEVG) match the Nudix box motif. Residues 367 to 369 (LEN) carry the Microbody targeting signal motif.

The protein belongs to the Nudix hydrolase family. NudC subfamily. Homodimer. Mg(2+) serves as cofactor. Mn(2+) is required as a cofactor. It depends on Zn(2+) as a cofactor.

The enzyme catalyses a 5'-end NAD(+)-phospho-ribonucleoside in mRNA + H2O = a 5'-end phospho-adenosine-phospho-ribonucleoside in mRNA + beta-nicotinamide D-ribonucleotide + 2 H(+). The catalysed reaction is NAD(+) + H2O = beta-nicotinamide D-ribonucleotide + AMP + 2 H(+). It catalyses the reaction NADH + H2O = reduced beta-nicotinamide D-ribonucleotide + AMP + 2 H(+). In terms of biological role, mRNA decapping enzyme that specifically removes the nicotinamide adenine dinucleotide (NAD) cap from a subset of mRNAs by hydrolyzing the diphosphate linkage to produce nicotinamide mononucleotide (NMN) and 5' monophosphate mRNA. The NAD-cap is present at the 5'-end of some RNAs; in contrast to the canonical N7 methylguanosine (m7G) cap, the NAD cap promotes mRNA decay. Mediates the hydrolysis of some nucleoside diphosphate derivatives. The polypeptide is NAD-capped RNA hydrolase ndx-9 (ndx-9) (Caenorhabditis elegans).